Here is a 602-residue protein sequence, read N- to C-terminus: DNA mismatch repair protein MutL (602 aa).

Belongs to the DNA mismatch repair MutL/HexB family.

This protein is involved in the repair of mismatches in DNA. It is required for dam-dependent methyl-directed DNA mismatch repair. May act as a 'molecular matchmaker', a protein that promotes the formation of a stable complex between two or more DNA-binding proteins in an ATP-dependent manner without itself being part of a final effector complex. This is DNA mismatch repair protein MutL from Geotalea uraniireducens (strain Rf4) (Geobacter uraniireducens).